Consider the following 467-residue polypeptide: Iroquois-class homeodomain protein irx-1 (467 aa).

Positions 126 to 188 form a DNA-binding region, homeobox; TALE-type; it reads DPGRPKNATR…NARRRLKKEN (63 aa). 3 disordered regions span residues 198 to 307, 319 to 342, and 410 to 467; these read EDDN…PHNK, SPDG…PIQH, and SLSS…LPSA. Composition is skewed to acidic residues over residues 215-225 and 233-244; these read EDDEEIDLESI and NDGEQSNEEEDE. The span at 245–262 shows a compositional bias: basic and acidic residues; it reads KLEHLRQGEKESFKKESE. The span at 415–431 shows a compositional bias: basic and acidic residues; the sequence is KTPERTSPKHSDRENLP. A compositionally biased stretch (polar residues) spans 447–460; it reads RENTLSQQEGTSRI.

The protein belongs to the TALE/IRO homeobox family. As to expression, expressed in the neural plate in overlapping patterns with other irx members, which all share an anterior border of expression. Also expressed in the mesoderm, placodes and notochord. Broadly expressed in the tailbud rhombencephalon (hindbrain). Outside the nervous system and at tailbud stages, expressed in the developing otic vesicle, branchial arches, prospective heart region and pronephros.

The protein resides in the nucleus. In terms of biological role, acts partially redundantly with other irx members in neural patterning. Required for formation of the posterior forebrain, midbrain, hindbrain, and to a lesser extent, spinal cord. Acts early in neural plate development to induce expression of some but not all proneural genes, and specify a neural precursor state. Also up-regulates repressors that prevent neuronal differentiation. Patterns the neuroectoderm in both the anterior/posterior and dorsal/ventral axes. Acts primarily as a transcriptional repressor during neural development, and binds to the bmp4 promoter to repress gene expression and thus mediate down-regulation of bmp4 by wnt signaling. Controls multiple processes through bmp4-repression including neural plate development, neural crest specification and Spemann organizer development. Involved in the specification of the preplacodal field at the anterior border of the neural plate. Regulates the genetic cascade of interactions that are necessary for positioning the isthmus organizer and the formation of the midbrain-hindbrain boundary. Required during at least two stages of pronephros kidney development; during neurula stages, maintains transcription of key renal genes to define the size and identity of the pronephric anlage, probably in part through regulation of bmp-signaling. Subsequently required for proper formation of the intermediate tubule segment of the pronephros. Acts principally as a transcriptional activator during pronephros development. This is Iroquois-class homeodomain protein irx-1 from Xenopus tropicalis (Western clawed frog).